Reading from the N-terminus, the 291-residue chain is 4-diphosphocytidyl-2-C-methyl-D-erythritol kinase (291 aa).

The active site involves Lys11. ATP is bound at residue 97 to 107 (PVAAGIGGGSS). Residue Asp139 is part of the active site.

Belongs to the GHMP kinase family. IspE subfamily.

It catalyses the reaction 4-CDP-2-C-methyl-D-erythritol + ATP = 4-CDP-2-C-methyl-D-erythritol 2-phosphate + ADP + H(+). The protein operates within isoprenoid biosynthesis; isopentenyl diphosphate biosynthesis via DXP pathway; isopentenyl diphosphate from 1-deoxy-D-xylulose 5-phosphate: step 3/6. Functionally, catalyzes the phosphorylation of the position 2 hydroxy group of 4-diphosphocytidyl-2C-methyl-D-erythritol. This Methylorubrum extorquens (strain CM4 / NCIMB 13688) (Methylobacterium extorquens) protein is 4-diphosphocytidyl-2-C-methyl-D-erythritol kinase.